A 126-amino-acid chain; its full sequence is Fluoride-specific ion channel FluC (126 aa).

Transmembrane regions (helical) follow at residues 3–23 (FAIL…RFLV), 37–57 (IGTL…IACV), 70–90 (VIGL…MDNV), and 104–124 (NVLL…HWLM). Na(+) contacts are provided by Gly77 and Thr80.

The protein belongs to the fluoride channel Fluc/FEX (TC 1.A.43) family.

Its subcellular location is the cell inner membrane. It carries out the reaction fluoride(in) = fluoride(out). Its activity is regulated as follows. Na(+) is not transported, but it plays an essential structural role and its presence is essential for fluoride channel function. Fluoride-specific ion channel. Important for reducing fluoride concentration in the cell, thus reducing its toxicity. This chain is Fluoride-specific ion channel FluC, found in Vibrio cholerae serotype O1 (strain ATCC 39541 / Classical Ogawa 395 / O395).